We begin with the raw amino-acid sequence, 688 residues long: UvrABC system protein C (688 aa).

Residues 1 to 14 (MSPLDQKNKPRGGA) are compositionally biased toward basic and acidic residues. A disordered region spans residues 1–20 (MSPLDQKNKPRGGADDLPPE). One can recognise a GIY-YIG domain in the interval 71-149 (NAPGVYRMMN…IKRLRPRFNV (79 aa)). Positions 259-294 (QKVKTEISAAMQQASEDLDFERAAIYRDRLAALSHV) constitute a UVR domain.

It belongs to the UvrC family. In terms of assembly, interacts with UvrB in an incision complex.

It is found in the cytoplasm. Functionally, the UvrABC repair system catalyzes the recognition and processing of DNA lesions. UvrC both incises the 5' and 3' sides of the lesion. The N-terminal half is responsible for the 3' incision and the C-terminal half is responsible for the 5' incision. This Mesorhizobium japonicum (strain LMG 29417 / CECT 9101 / MAFF 303099) (Mesorhizobium loti (strain MAFF 303099)) protein is UvrABC system protein C.